A 291-amino-acid polypeptide reads, in one-letter code: Phosphoribosylaminoimidazole-succinocarboxamide synthase (291 aa).

It belongs to the SAICAR synthetase family.

It catalyses the reaction 5-amino-1-(5-phospho-D-ribosyl)imidazole-4-carboxylate + L-aspartate + ATP = (2S)-2-[5-amino-1-(5-phospho-beta-D-ribosyl)imidazole-4-carboxamido]succinate + ADP + phosphate + 2 H(+). It participates in purine metabolism; IMP biosynthesis via de novo pathway; 5-amino-1-(5-phospho-D-ribosyl)imidazole-4-carboxamide from 5-amino-1-(5-phospho-D-ribosyl)imidazole-4-carboxylate: step 1/2. The polypeptide is Phosphoribosylaminoimidazole-succinocarboxamide synthase (ADE1) (Candida albicans (Yeast)).